A 397-amino-acid polypeptide reads, in one-letter code: Elongation factor Tu (397 aa).

The region spanning 10–206 (KPHVNIGTIG…AVDSYIPTPE (197 aa)) is the tr-type G domain. The G1 stretch occupies residues 19-26 (GHVDHGKT). 19-26 (GHVDHGKT) contacts GTP. Thr-26 serves as a coordination point for Mg(2+). A G2 region spans residues 60–64 (GITIN). Residues 81–84 (DCPG) are G3. Residues 81–85 (DCPGH) and 136–139 (NKAD) each bind GTP. The G4 stretch occupies residues 136–139 (NKAD). The interval 174-176 (SAL) is G5.

This sequence belongs to the TRAFAC class translation factor GTPase superfamily. Classic translation factor GTPase family. EF-Tu/EF-1A subfamily. Monomer.

It localises to the cytoplasm. The catalysed reaction is GTP + H2O = GDP + phosphate + H(+). GTP hydrolase that promotes the GTP-dependent binding of aminoacyl-tRNA to the A-site of ribosomes during protein biosynthesis. This chain is Elongation factor Tu, found in Clostridium perfringens (strain ATCC 13124 / DSM 756 / JCM 1290 / NCIMB 6125 / NCTC 8237 / Type A).